The sequence spans 101 residues: Ubiquitin-related modifier 1 (101 aa).

G101 carries the post-translational modification 1-thioglycine. A Glycyl lysine isopeptide (Gly-Lys) (interchain with K-? in acceptor proteins) cross-link involves residue G101.

Belongs to the URM1 family. Post-translationally, C-terminal thiocarboxylation occurs in 2 steps, it is first acyl-adenylated (-COAMP) via the hesA/moeB/thiF part of UBA4, then thiocarboxylated (-COSH) via the rhodanese domain of UBA4.

It is found in the cytoplasm. It participates in tRNA modification; 5-methoxycarbonylmethyl-2-thiouridine-tRNA biosynthesis. Functionally, acts as a sulfur carrier required for 2-thiolation of mcm(5)S(2)U at tRNA wobble positions of cytosolic tRNA(Lys), tRNA(Glu) and tRNA(Gln). Serves as sulfur donor in tRNA 2-thiolation reaction by being thiocarboxylated (-COSH) at its C-terminus by the MOCS3 homolog UBA4. The sulfur is then transferred to tRNA to form 2-thiolation of mcm(5)S(2)U. Prior mcm(5) tRNA modification by the elongator complex is required for 2-thiolation. Also acts as a ubiquitin-like protein (UBL) that is covalently conjugated via an isopeptide bond to lysine residues of target proteins such as AHP1. The thiocarboxylated form serves as substrate for conjugation and oxidative stress specifically induces the formation of UBL-protein conjugates. This is Ubiquitin-related modifier 1 from Candida albicans (strain SC5314 / ATCC MYA-2876) (Yeast).